We begin with the raw amino-acid sequence, 346 residues long: Phosphoribosylformylglycinamidine cyclo-ligase (346 aa).

It belongs to the AIR synthase family.

The protein localises to the cytoplasm. The enzyme catalyses 2-formamido-N(1)-(5-O-phospho-beta-D-ribosyl)acetamidine + ATP = 5-amino-1-(5-phospho-beta-D-ribosyl)imidazole + ADP + phosphate + H(+). It participates in purine metabolism; IMP biosynthesis via de novo pathway; 5-amino-1-(5-phospho-D-ribosyl)imidazole from N(2)-formyl-N(1)-(5-phospho-D-ribosyl)glycinamide: step 2/2. This chain is Phosphoribosylformylglycinamidine cyclo-ligase, found in Bacillus thuringiensis subsp. konkukian (strain 97-27).